The primary structure comprises 52 residues: Large ribosomal subunit protein eL39 (52 aa).

This sequence belongs to the eukaryotic ribosomal protein eL39 family.

In Desulfurococcus amylolyticus (strain DSM 18924 / JCM 16383 / VKM B-2413 / 1221n) (Desulfurococcus kamchatkensis), this protein is Large ribosomal subunit protein eL39.